A 91-amino-acid chain; its full sequence is Lipolysis-activating peptide 1-alpha chain (91 aa).

Residues 1–22 (MMKLVLFGIIVILFSLIGSIHG) form the signal peptide. Residues 24 to 87 (SGNYPLNPYG…VWNAVKKHCK (64 aa)) enclose the LCN-type CS-alpha/beta domain. 3 cysteine pairs are disulfide-bonded: cysteine 38–cysteine 61, cysteine 47–cysteine 66, and cysteine 51–cysteine 68.

Belongs to the long (3 C-C) scorpion toxin superfamily. Monomer (edited version) and heterodimer (non-edited version) of this alpha chain and a beta chain (AC P84809). Expressed by the venom gland.

It localises to the secreted. Its function is as follows. The heterodimer non-edited LVP1 induces lipolysis in rat adipocytes. Induction of lipolysis by LVP1 appears to be mediated through the beta-2 adrenergic receptor pathway (ADRB2). Intracerebroventricular injection is not toxic to mice. The edited BmKBTx-like, similar to beta-toxins, may modulate voltage-gated sodium channels (Nav) and may block voltage-gated potassium channels (Kv). This chain is Lipolysis-activating peptide 1-alpha chain, found in Buthus occitanus tunetanus (Common European scorpion).